Reading from the N-terminus, the 187-residue chain is Bis(5'-nucleosyl)-tetraphosphatase, symmetrical (187 aa).

Positions 18 to 132 constitute an HD domain; the sequence is RYQHTIGVME…IFLADYIEPN (115 aa). ADP is bound at residue His21. 3 residues coordinate Fe cation: His21, His50, and Asp51. Residues 51-54, His83, 109-110, Asp127, Arg133, and 170-175 contribute to the ADP site; these read DYAK, HT, and PIYPDT. Asp127 lines the Fe cation pocket.

Belongs to the Ap4A hydrolase YqeK family. As to quaternary structure, homodimer.

The enzyme catalyses P(1),P(4)-bis(5'-adenosyl) tetraphosphate + H2O = 2 ADP + 2 H(+). In terms of biological role, hydrolyzes diadenosine 5',5'''-P1,P4-tetraphosphate (Ap4A) to yield ADP. This is Bis(5'-nucleosyl)-tetraphosphatase, symmetrical from Halalkalibacterium halodurans (strain ATCC BAA-125 / DSM 18197 / FERM 7344 / JCM 9153 / C-125) (Bacillus halodurans).